Consider the following 378-residue polypeptide: AT-hook motif nuclear-localized protein 5 (378 aa).

Disordered stretches follow at residues 30-70 (QVAS…AEHR), 88-160 (VQPT…GRKQ), and 302-378 (NNNK…LTRG). Residues 104–113 (VKKKRGRPRK) show a composition bias toward basic residues. Residues 105 to 113 (KKKRGRPRK) carry the Bipartite nuclear localization signal motif. 2 consecutive DNA-binding regions (a.T hook) follow at residues 105–117 (KKKRGRPRKYVPD) and 147–159 (KRARGRPPGTGRK). Residues 171-314 (TSAGLAFAPH…KTIKQEIKPK (144 aa)) enclose the PPC domain. Composition is skewed to polar residues over residues 316–327 (EPTNSEMETTPG) and 335–345 (STGQHTPQNFP).

As to quaternary structure, interacts with AHL29.

It localises to the nucleus. Its function is as follows. Transcription factor that specifically binds AT-rich DNA sequences related to the nuclear matrix attachment regions (MARs). The sequence is that of AT-hook motif nuclear-localized protein 5 from Arabidopsis thaliana (Mouse-ear cress).